A 291-amino-acid polypeptide reads, in one-letter code: 3-hydroxy-5-phosphonooxypentane-2,4-dione thiolase (291 aa).

The active-site Schiff-base intermediate with substrate is Lys-203.

This sequence belongs to the DeoC/FbaB aldolase family. As to quaternary structure, homodecamer.

The protein localises to the cytoplasm. It catalyses the reaction dihydroxyacetone phosphate + acetyl-CoA = 3-hydroxy-2,4-dioxopentyl phosphate + CoA. Functionally, involved in the degradation of phospho-AI-2, thereby terminating induction of the lsr operon and closing the AI-2 signaling cycle. Catalyzes the transfer of an acetyl moiety from 3-hydroxy-5-phosphonooxypentane-2,4-dione to CoA to form glycerone phosphate and acetyl-CoA. In Salmonella typhimurium (strain LT2 / SGSC1412 / ATCC 700720), this protein is 3-hydroxy-5-phosphonooxypentane-2,4-dione thiolase.